The following is a 256-amino-acid chain: CRAL-TRIO domain-containing protein DDB_G0278031 (256 aa).

One can recognise a CRAL-TRIO domain in the interval 82 to 245 (NPELAMKSSS…EYGGTLNLTY (164 aa)).

This Dictyostelium discoideum (Social amoeba) protein is CRAL-TRIO domain-containing protein DDB_G0278031.